The chain runs to 257 residues: Transmembrane protein C257L (257 aa).

2 helical membrane passes run Leu-123–Leu-143 and Met-163–Val-183.

The protein belongs to the asfivirus C257R family.

Its subcellular location is the host membrane. The protein resides in the virion. The sequence is that of Transmembrane protein C257L from Ornithodoros (relapsing fever ticks).